A 208-amino-acid chain; its full sequence is MRLWFCLSFFIVLCLEHFPETLADERNVPESEEKTEQYLRDLPKINRKGPRPPGFSPFRGKFHSQSLRDLPKINRKGPRPPGFSPFRGKFHSQSLRDLPKINRKGPRPPGFSPFRGKFHSQSLRDLPKINRKGPRPPGFSPFRGKFHSQSLRDLPKINRKGPRPPGFSPFRGKFHSQSLRDLPKINRKGPRPPGFSPFRGKFHSQSHV.

A signal peptide spans 1–23 (MRLWFCLSFFIVLCLEHFPETLA). The span at 27 to 44 (NVPESEEKTEQYLRDLPK) shows a compositional bias: basic and acidic residues. The disordered stretch occupies residues 27 to 208 (NVPESEEKTE…RGKFHSQSHV (182 aa)).

The protein belongs to the bradykinin-related peptide family. As to expression, expressed by the skin glands.

Its subcellular location is the secreted. In vitro, produces constriction of guinea pig ileum smooth muscle. May target bradykinin receptors (BDKRB). This Bombina maxima (Giant fire-bellied toad) protein is Kininogen-1b.